The chain runs to 165 residues: SsrA-binding protein (165 aa).

Positions 141–165 are disordered; sequence KLHDKRQDEKRKQADREVKSALARY. A compositionally biased stretch (basic and acidic residues) spans 145–159; it reads KRQDEKRKQADREVK.

The protein belongs to the SmpB family.

The protein resides in the cytoplasm. Its function is as follows. Required for rescue of stalled ribosomes mediated by trans-translation. Binds to transfer-messenger RNA (tmRNA), required for stable association of tmRNA with ribosomes. tmRNA and SmpB together mimic tRNA shape, replacing the anticodon stem-loop with SmpB. tmRNA is encoded by the ssrA gene; the 2 termini fold to resemble tRNA(Ala) and it encodes a 'tag peptide', a short internal open reading frame. During trans-translation Ala-aminoacylated tmRNA acts like a tRNA, entering the A-site of stalled ribosomes, displacing the stalled mRNA. The ribosome then switches to translate the ORF on the tmRNA; the nascent peptide is terminated with the 'tag peptide' encoded by the tmRNA and targeted for degradation. The ribosome is freed to recommence translation, which seems to be the essential function of trans-translation. The polypeptide is SsrA-binding protein (Prochlorococcus marinus (strain MIT 9313)).